The sequence spans 349 residues: Meiotic recombination protein DMC1 homolog (349 aa).

Residue 138-145 (GEFRSGKT) coordinates ATP. Position 240 (Arg-240) interacts with dsDNA. 5 residues coordinate ssDNA: Arg-240, Phe-243, Arg-246, Arg-252, and Arg-320. DsDNA is bound by residues Arg-246 and Arg-252.

It belongs to the RecA family. DMC1 subfamily. As to quaternary structure, double stacked ring-shaped homooctamer.

The protein localises to the nucleus. May participate in meiotic recombination. This Lilium longiflorum (Trumpet lily) protein is Meiotic recombination protein DMC1 homolog (LIM15).